A 204-amino-acid polypeptide reads, in one-letter code: Synaptosomal-associated protein 25-A (204 aa).

Basic and acidic residues predominate over residues 1–11 (MAEDSDMRNEL). Positions 1 to 25 (MAEDSDMRNELADMQQRADQLADES) are disordered. 2 consecutive t-SNARE coiled-coil homology domains span residues 19-81 (DQLA…LNDL) and 138-200 (DARE…ATKM).

It belongs to the SNAP-25 family. In terms of tissue distribution, expressed in several regions throughout the adult brain, including the mesencephalon.

The protein localises to the synapse. It localises to the synaptosome. Its subcellular location is the cell membrane. May play an important role in the synaptic function of specific neuronal systems. Associates with proteins involved in vesicle docking and membrane fusion. This chain is Synaptosomal-associated protein 25-A, found in Danio rerio (Zebrafish).